We begin with the raw amino-acid sequence, 1265 residues long: Kinesin-related protein 13 (1265 aa).

The 328-residue stretch at 23–350 (NIQAFVRVRP…LEYALKAKNI (328 aa)) folds into the Kinesin motor domain. 106–113 (GQTGTGKT) contributes to the ATP binding site. The stretch at 331 to 459 (LVNLEETINT…KQQQEKQKFI (129 aa)) forms a coiled coil. 5 disordered regions span residues 918-1026 (KSGE…QPLI), 1085-1119 (SLVN…LSQL), 1127-1146 (LQPQ…LNGS), 1158-1214 (LLDD…NQSL), and 1245-1265 (FGGG…TPLK). Positions 930–951 (IPSPISTSSSSSSSSSISSIHS) are enriched in low complexity. 3 stretches are compositionally biased toward polar residues: residues 960–980 (HQSI…SINC), 1003–1026 (LNLN…QPLI), and 1085–1097 (SLVN…SPKL). Low complexity-rich tracts occupy residues 1100–1119 (QKIL…LSQL) and 1128–1146 (QPQQ…LNGS). Over residues 1158 to 1169 (LLDDDSDSDNSD) the composition is skewed to acidic residues. The span at 1174-1195 (SLLSSNKKSSRASKNAVVSKKV) shows a compositional bias: low complexity. Residues 1250–1265 (TISSKLKSLKQQTPLK) show a composition bias toward polar residues.

The protein belongs to the TRAFAC class myosin-kinesin ATPase superfamily. Kinesin family. BimC subfamily.

It localises to the cytoplasm. The protein resides in the cytoskeleton. In terms of biological role, microtubule-associated force-producing protein that plays a role in organelle transport. Its motor activity is directed toward the microtubule's plus end. Cooperates with dynein to control the spindle elongation rate, but is dispensable for mitosis. This is Kinesin-related protein 13 (kif13) from Dictyostelium discoideum (Social amoeba).